Here is a 387-residue protein sequence, read N- to C-terminus: MATTKSFLILIVMILATTSSTFASLEEMVTVLSIDGGGIKGIIPGTILEFLGGQLQKMDNNADARLADYFDVIGGTSTGGLLTAMITTPNENNRPFAAANEIVPFYFEHGPHIFNSSTGQFFGPKYDGKYLMQVLQEKLGETRVHQALTEVAISSFDIKTNKPVIFTKSNLAKSPELDAKMYDICYSTAAAPIYFPPHYFITHTSNGDIYEFNLVDGGVATVGDPALLSLSVATRLAQEDPAFSSIKSLDYKQMLLLSLGTGTNSEFDKTYTAQEAAKWGPLRWMLAIRQMTNAASSYMADYYISTVFQARHSQNNYLRVQENALTGTTTEMDDASEANMELLVQVGETLLKKPVSKDSPETYEEALKRFAKLLSDRKKLRANKASY.

The N-terminal stretch at 1 to 23 (MATTKSFLILIVMILATTSSTFA) is a signal peptide. One can recognise a PNPLA domain in the interval 32-230 (LSIDGGGIKG…TVGDPALLSL (199 aa)). A GXGXXG motif is present at residues 36–41 (GGGIKG). The GXSXG motif lies at 75 to 79 (GTSTG). Catalysis depends on serine 77, which acts as the Nucleophile. Asparagine 115 is a glycosylation site (N-linked (GlcNAc...) asparagine). The active-site Proton acceptor is the aspartate 216. The DGA/G motif lies at 216–218 (DGG). A coiled-coil region spans residues 322 to 385 (ENALTGTTTE…DRKKLRANKA (64 aa)).

It belongs to the patatin family. Tuber.

It is found in the vacuole. Probable lipolytic acyl hydrolase (LAH), an activity which is thought to be involved in the response of tubers to pathogens. The chain is Patatin-12 from Solanum tuberosum (Potato).